Reading from the N-terminus, the 494-residue chain is UPF0371 protein SPH_0451 (494 aa).

This sequence belongs to the UPF0371 family.

This is UPF0371 protein SPH_0451 from Streptococcus pneumoniae (strain Hungary19A-6).